The following is a 398-amino-acid chain: Cell division protein FtsZ (398 aa).

GTP contacts are provided by residues 24–28 (GAGGN), 111–113 (GTG), E154, R158, and D202. The interval 333–381 (GRNNKSETSPISQSEDSEKEKFKWPYSQSESTQDKTLETKPAEQVSEGA) is disordered. Positions 364-373 (TQDKTLETKP) are enriched in basic and acidic residues.

The protein belongs to the FtsZ family. In terms of assembly, homodimer. Polymerizes to form a dynamic ring structure in a strictly GTP-dependent manner. Interacts directly with several other division proteins.

It localises to the cytoplasm. In terms of biological role, essential cell division protein that forms a contractile ring structure (Z ring) at the future cell division site. The regulation of the ring assembly controls the timing and the location of cell division. One of the functions of the FtsZ ring is to recruit other cell division proteins to the septum to produce a new cell wall between the dividing cells. Binds GTP and shows GTPase activity. The sequence is that of Cell division protein FtsZ from Wolbachia sp.